We begin with the raw amino-acid sequence, 150 residues long: MRIWIDADACPKAAKDLIVKFALKRKLEVVMVAGQAVAKPAFAVVRLIVVPSGMDAADDYLVEHAVPGELVICSDVPLADRLIKKGVAALDPRGREFDERNMGDRLAVRNLFTELREQGQAGGGQGPYGEREKQAFANALDRILARLAKG.

The protein belongs to the UPF0178 family.

The protein is UPF0178 protein PputW619_5044 of Pseudomonas putida (strain W619).